The sequence spans 33 residues: Large ribosomal subunit protein eL21 (33 aa).

Belongs to the eukaryotic ribosomal protein eL21 family. As to quaternary structure, component of the large ribosomal subunit.

The protein resides in the cytoplasm. The protein localises to the cytosol. It is found in the endoplasmic reticulum. In terms of biological role, component of the large ribosomal subunit. The ribosome is a large ribonucleoprotein complex responsible for the synthesis of proteins in the cell. The chain is Large ribosomal subunit protein eL21 (rpl21) from Xenopus laevis (African clawed frog).